Consider the following 75-residue polypeptide: OcyC3 (75 aa).

The signal sequence occupies residues Met1–Ala22. Residues Glu51–Gln75 constitute a propeptide that is removed on maturation.

As to expression, expressed by the venom gland.

The protein localises to the secreted. It is found in the target cell membrane. Its function is as follows. Amphipathic peptide with probable antimicrobial activity. May act by disrupting the integrity of the bacterial cell membrane. The polypeptide is OcyC3 (Opisthacanthus cayaporum (South American scorpion)).